We begin with the raw amino-acid sequence, 578 residues long: Sulfite reductase [NADPH] hemoprotein beta-component (578 aa).

Residues 1-11 (MSANQQSNSQE) show a composition bias toward polar residues. Positions 1-20 (MSANQQSNSQEVLGEVLGPL) are disordered. The [4Fe-4S] cluster site is built by Cys-441, Cys-447, Cys-487, and Cys-491. Cys-491 lines the siroheme pocket.

It belongs to the nitrite and sulfite reductase 4Fe-4S domain family. Alpha(8)-beta(8). The alpha component is a flavoprotein, the beta component is a hemoprotein. Siroheme serves as cofactor. Requires [4Fe-4S] cluster as cofactor.

The catalysed reaction is hydrogen sulfide + 3 NADP(+) + 3 H2O = sulfite + 3 NADPH + 4 H(+). It functions in the pathway sulfur metabolism; hydrogen sulfide biosynthesis; hydrogen sulfide from sulfite (NADPH route): step 1/1. Component of the sulfite reductase complex that catalyzes the 6-electron reduction of sulfite to sulfide. This is one of several activities required for the biosynthesis of L-cysteine from sulfate. This chain is Sulfite reductase [NADPH] hemoprotein beta-component, found in Vibrio campbellii (strain ATCC BAA-1116).